We begin with the raw amino-acid sequence, 1228 residues long: DNA-directed RNA polymerase subunit beta'' (1228 aa).

Positions 222, 296, 303, and 306 each coordinate Zn(2+).

It belongs to the RNA polymerase beta' chain family. RpoC2 subfamily. As to quaternary structure, in plastids the minimal PEP RNA polymerase catalytic core is composed of four subunits: alpha, beta, beta', and beta''. When a (nuclear-encoded) sigma factor is associated with the core the holoenzyme is formed, which can initiate transcription. Requires Zn(2+) as cofactor.

Its subcellular location is the plastid. It localises to the chloroplast. It catalyses the reaction RNA(n) + a ribonucleoside 5'-triphosphate = RNA(n+1) + diphosphate. Its function is as follows. DNA-dependent RNA polymerase catalyzes the transcription of DNA into RNA using the four ribonucleoside triphosphates as substrates. This is DNA-directed RNA polymerase subunit beta'' from Gracilaria tenuistipitata var. liui (Red alga).